Here is a 142-residue protein sequence, read N- to C-terminus: Large ribosomal subunit protein uL13 (142 aa).

This sequence belongs to the universal ribosomal protein uL13 family. Part of the 50S ribosomal subunit.

This protein is one of the early assembly proteins of the 50S ribosomal subunit, although it is not seen to bind rRNA by itself. It is important during the early stages of 50S assembly. The protein is Large ribosomal subunit protein uL13 of Pyrococcus horikoshii (strain ATCC 700860 / DSM 12428 / JCM 9974 / NBRC 100139 / OT-3).